The following is a 489-amino-acid chain: N-succinylglutamate 5-semialdehyde dehydrogenase (489 aa).

NAD(+) is bound at residue 223–228 (GSSNTG). Active-site residues include Glu-246 and Cys-280.

This sequence belongs to the aldehyde dehydrogenase family. AstD subfamily.

It carries out the reaction N-succinyl-L-glutamate 5-semialdehyde + NAD(+) + H2O = N-succinyl-L-glutamate + NADH + 2 H(+). The protein operates within amino-acid degradation; L-arginine degradation via AST pathway; L-glutamate and succinate from L-arginine: step 4/5. In terms of biological role, catalyzes the NAD-dependent reduction of succinylglutamate semialdehyde into succinylglutamate. In Idiomarina loihiensis (strain ATCC BAA-735 / DSM 15497 / L2-TR), this protein is N-succinylglutamate 5-semialdehyde dehydrogenase.